Reading from the N-terminus, the 294-residue chain is Potassium-transporting ATPase subunit beta (294 aa).

Residues 1 to 36 (MAALQEKKSCSQRMAEFRQYCWNPDTGQMLGRTPAR) lie on the Cytoplasmic side of the membrane. The chain crosses the membrane as a helical; Signal-anchor for type II membrane protein span at residues 37–57 (WVWISLYYAAFYVVMTGLFAL). Residues 58–294 (CIYVLMQTID…KVEFKLTIQK (237 aa)) are Extracellular-facing. N-linked (GlcNAc...) asparagine glycosylation is found at Asn-99, Asn-103, Asn-130, Asn-146, and Asn-161. Cys-131 and Cys-152 are oxidised to a cystine. A disulfide bridge connects residues Cys-162 and Cys-178. Asn-193 and Asn-225 each carry an N-linked (GlcNAc...) asparagine glycan. The interval 194–294 (NTAPRVDCTF…KVEFKLTIQK (101 aa)) is immunoglobulin-like. Cysteines 201 and 266 form a disulfide.

The protein belongs to the X(+)/potassium ATPases subunit beta family. The ATPase pump is composed of two subunits: alpha (catalytic) and beta (regulatory). Interacts with alpha subunit ATP12A; this interaction is required for the formation of a functionally active pump and targeting at the plasma membrane. Interacts (via N-terminus) with alpha subunit ATP4A (via the P-domain). N-glycosylation is necessary for assembly and functional expression of the pump at the plasma membrane. Stomach.

It localises to the apical cell membrane. The protein resides in the cell membrane. Its function is as follows. The beta subunit of the gastric H(+)/K(+) ATPase pump which transports H(+) ions in exchange for K(+) ions across the apical membrane of parietal cells. Plays a structural and regulatory role in the assembly and membrane targeting of a functionally active pump. Within a transport cycle, the transfer of a H(+) ion across the membrane is coupled to ATP hydrolysis and is associated with a transient phosphorylation of the alpha subunit that shifts the pump conformation from inward-facing (E1) to outward-facing state (E2). Interacts with the phosphorylation domain of the alpha subunit and functions as a ratchet, stabilizing the lumenal-open E2 conformation and preventing the reverse reaction of the transport cycle. This chain is Potassium-transporting ATPase subunit beta (Atp4b), found in Rattus norvegicus (Rat).